A 279-amino-acid chain; its full sequence is NAD kinase (279 aa).

The active-site Proton acceptor is the Asp-61. Residues 61 to 62, 138 to 139, Lys-149, Lys-166, Asp-168, and 179 to 184 each bind NAD(+); these read DG, ND, and TGYSFS.

Belongs to the NAD kinase family. A divalent metal cation is required as a cofactor.

The protein localises to the cytoplasm. The catalysed reaction is NAD(+) + ATP = ADP + NADP(+) + H(+). In terms of biological role, involved in the regulation of the intracellular balance of NAD and NADP, and is a key enzyme in the biosynthesis of NADP. Catalyzes specifically the phosphorylation on 2'-hydroxyl of the adenosine moiety of NAD to yield NADP. This Borreliella burgdorferi (strain ATCC 35210 / DSM 4680 / CIP 102532 / B31) (Borrelia burgdorferi) protein is NAD kinase.